The chain runs to 361 residues: Transcription factor MafA (361 aa).

Phosphoserine is present on S14. K32 is covalently cross-linked (Glycyl lysine isopeptide (Lys-Gly) (interchain with G-Cter in SUMO2)). 2 disordered regions span residues 40 to 105 (RFCH…VGGA) and 175 to 228 (GGAD…AGHH). The span at 46-76 (PPGSLSSTPLSTPCSSVPSSPSFCAPSPGTG) shows a compositional bias: low complexity. Position 49 is a phosphoserine (S49). 2 positions are modified to phosphothreonine: T53 and T57. Residues S61 and S65 each carry the phosphoserine modification. Over residues 183-211 (GHHHGAHHTAHHHHSAHHHHHHHHHHGGS) the composition is skewed to basic residues. Gly residues predominate over residues 212 to 226 (GHHGGGAGHGGGGAG). A basic motif region spans residues 262-287 (RLKQKRRTLKNRGYAQSCRFKRVQQR). One can recognise a bZIP domain in the interval 262–325 (RLKQKRRTLK…DLYKEKYEKL (64 aa)). The segment at 290-311 (LESEKCQLQSQVEQLKLEVGRL) is leucine-zipper. Residues 324-361 (KLAGRGGPGGAGGAGFPREPSPAQAGPGAAKGAPDFFL) are disordered. Gly residues predominate over residues 327 to 338 (GRGGPGGAGGAG). A compositionally biased stretch (low complexity) spans 345-361 (PAQAGPGAAKGAPDFFL).

The protein belongs to the bZIP family. Forms homodimers. Monomers and dimers are able to bind DNA, but the off-rate is faster for monomers. Interacts with NEUROD1 and PDX1. May interact with MAFB, FOS, JUN and PCAF. Post-translationally, ubiquitinated, leading to its degradation by the proteasome. Phosphorylated at tyrosines.

Its subcellular location is the nucleus. Its function is as follows. Transcription factor that activates insulin gene expression. Acts synergistically with NEUROD1/BETA2 and PDX1. Binds the insulin enhancer C1/RIPE3b element. Binds to consensus TRE-type MARE 5'-TGCTGACTCAGCA-3' DNA sequence. The chain is Transcription factor MafA (Mafa) from Rattus norvegicus (Rat).